The sequence spans 2614 residues: Talin-B (2614 aa).

The 285-residue stretch at 85-369 (RPLKVRLMDE…GYIEILMKKR (285 aa)) folds into the FERM domain. The interval 393–421 (RGQTSQATTSSSLSGYDGNGGREGQYSAP) is disordered. A compositionally biased stretch (low complexity) spans 395–406 (QTSQATTSSSLS). Coiled coils occupy residues 1938–1965 (TQNI…ASGK) and 2033–2057 (NKAI…LVQS). Positions 2219–2460 (LLFAAGESLE…SIRKKEYSDQ (242 aa)) constitute an I/LWEQ domain. Positions 2454–2557 (KKEYSDQTGN…AAPTAAAPNK (104 aa)) are disordered. Positions 2473 to 2487 (KPTTSISVGITPTKR) are enriched in polar residues. Low complexity predominate over residues 2517 to 2537 (KKPAPSQAPSSPVAPVSAPVS). The segment covering 2538–2548 (KPSPKPAPKPA) has biased composition (pro residues). Positions 2553-2614 (AAPNKTYTLE…NNIKTKLGLF (62 aa)) constitute an HP domain.

The protein localises to the cytoplasm. The protein resides in the cytoskeleton. It localises to the cell cortex. Functionally, actin-binding protein required for multicellular morphogenesis. Substrate of pkgB and/or pkbA. The polypeptide is Talin-B (talB) (Dictyostelium discoideum (Social amoeba)).